The following is a 221-amino-acid chain: Sugar transporter SWEET1 (221 aa).

Helical transmembrane passes span 3-23 (AGGFLDSLIYGACVVFTLGMF), 42-62 (VQFLPFLTTEVNNLGWLSYGA), 68-88 (ILIVVNTVGAALQTLYILAYL), 96-116 (VVLLQTATLLGVLLLGYGYFW), 126-146 (LQLLGLFCSVFTISMYLSPLA), 160-180 (LSYPLTIATVLTSASWCLYGF), and 186-206 (YIMVSNFPGIVTSFIRFWLFW). The 85-residue stretch at 10–94 (LIYGACVVFT…LAYLHYCPRK (85 aa)) folds into the MtN3/slv 1 domain. The MtN3/slv 2 domain occupies 127–212 (QLLGLFCSVF…WLFWKYPQEQ (86 aa)). Residues 149–221 (AKVIQTKSTQ…QDRNYWFLQT (73 aa)) form a mediates interaction with TRPV2 region.

Belongs to the SWEET sugar transporter family. Interacts with TRPV2; the interaction probably occurs intracellularly and depends on TRPV2 N-glycosylation.

It localises to the golgi apparatus membrane. The protein resides in the cell membrane. Mediates sugar transport across membranes. May stimulate V(D)J recombination by the activation of RAG1. This is Sugar transporter SWEET1 (SLC50A1) from Papio anubis (Olive baboon).